The sequence spans 343 residues: Methionine import ATP-binding protein MetN (343 aa).

The region spanning 2-241 is the ABC transporter domain; sequence IKLSNITKVF…PKTPLAQKFI (240 aa). 38–45 contributes to the ATP binding site; it reads GASGAGKS.

This sequence belongs to the ABC transporter superfamily. Methionine importer (TC 3.A.1.24) family. As to quaternary structure, the complex is composed of two ATP-binding proteins (MetN), two transmembrane proteins (MetI) and a solute-binding protein (MetQ).

The protein localises to the cell inner membrane. The catalysed reaction is L-methionine(out) + ATP + H2O = L-methionine(in) + ADP + phosphate + H(+). It catalyses the reaction D-methionine(out) + ATP + H2O = D-methionine(in) + ADP + phosphate + H(+). Part of the ABC transporter complex MetNIQ involved in methionine import. Responsible for energy coupling to the transport system. This Escherichia coli O6:K15:H31 (strain 536 / UPEC) protein is Methionine import ATP-binding protein MetN.